The chain runs to 529 residues: Bifunctional purine biosynthesis protein PurH (529 aa).

Residues M1 to V148 form the MGS-like domain.

Belongs to the PurH family.

The catalysed reaction is (6R)-10-formyltetrahydrofolate + 5-amino-1-(5-phospho-beta-D-ribosyl)imidazole-4-carboxamide = 5-formamido-1-(5-phospho-D-ribosyl)imidazole-4-carboxamide + (6S)-5,6,7,8-tetrahydrofolate. It carries out the reaction IMP + H2O = 5-formamido-1-(5-phospho-D-ribosyl)imidazole-4-carboxamide. Its pathway is purine metabolism; IMP biosynthesis via de novo pathway; 5-formamido-1-(5-phospho-D-ribosyl)imidazole-4-carboxamide from 5-amino-1-(5-phospho-D-ribosyl)imidazole-4-carboxamide (10-formyl THF route): step 1/1. It functions in the pathway purine metabolism; IMP biosynthesis via de novo pathway; IMP from 5-formamido-1-(5-phospho-D-ribosyl)imidazole-4-carboxamide: step 1/1. This chain is Bifunctional purine biosynthesis protein PurH, found in Salmonella agona (strain SL483).